The sequence spans 178 residues: MSNVRVSNGSPSLERMDARQAEYPKPSACRNLFGPVNHEELTRDLEKHRRDMEEASQRKWNFDFQNHKPLEGKYEWQEVEKGSLPEFYYRPPRPPKGACKVPAQESQDVSGTRQAVPLMGSQANSEDTHLVDQKTDTADNQAGLAEQCTGIRKRPATDDSSPQNKRANRTEENVSDGS.

The span at 1-11 (MSNVRVSNGSP) shows a compositional bias: polar residues. A disordered region spans residues 1–31 (MSNVRVSNGSPSLERMDARQAEYPKPSACRN). Ser10 is modified (phosphoserine; by UHMK1). The interval 51–91 (DMEEASQRKWNFDFQNHKPLEGKYEWQEVEKGSLPEFYYRP) is interaction with CDK2. Position 74 is a phosphotyrosine; by SRC (Tyr74). Residues 87–178 (FYYRPPRPPK…RTEENVSDGS (92 aa)) are disordered. A Phosphotyrosine; by ABL, LYN, SRC and JAK2 modification is found at Tyr88. The residue at position 89 (Tyr89) is a Phosphotyrosine. Residues 104–113 (QESQDVSGTR) show a composition bias toward polar residues. Positions 126-137 (EDTHLVDQKTDT) are enriched in basic and acidic residues. The Nuclear localization signal motif lies at 153–169 (KRPATDDSSPQNKRANR). Thr157 carries the post-translational modification Phosphothreonine; by CaMK1, PKB/AKT1, RPS6KA1, RPS6KA3 and PIM1. Thr170 is modified (phosphothreonine).

This sequence belongs to the CDI family. Forms a ternary complex composed of CCNE1, CDK2 and CDKN1B. Interacts directly with CCNE1; the interaction is inhibited by CDK2-dependent phosphorylation. Interacts with COPS5, subunit of the COP9 signalosome complex; the interaction leads to CDKN1B degradation. Interacts with NUP50; the interaction leads to nuclear import and degradation of phosphorylated CDKN1B. Interacts with CCND1 and SNX6. Interacts (Thr-198-phosphorylated form) with 14-3-3 proteins, binds strongly YWHAQ, weakly YWHAE and YWHAH, but not YWHAB nor YWHAZ; the interaction with YWHAQ results in translocation to the cytoplasm. Interacts with AKT1 and LYN; the interactions lead to cytoplasmic mislocation, phosphorylation of CDKN1B and inhibition of cell cycle arrest. Forms a ternary complex with CCNA2 and CDK2; CDKN1B inhibits the kinase activity of CDK2 through conformational rearrangements. Interacts (unphosphorylated form) with CDK2. Forms a complex with CDK2 and SPDYA, but does not directly interact with SPDYA. Forms a ternary complex composed of cyclin D, CDK4 and CDKN1B. Interacts (phosphorylated on Tyr-88 and Tyr-89) with CDK4; the interaction is required for cyclin D and CDK4 complex assembly, induces nuclear translocation and activates the CDK4 kinase activity. Interacts with GRB2. Interacts with PIM1. Identified in a complex with SKP1, SKP2 and CKS1B. Interacts with UHMK1; the interaction leads to cytoplasmic mislocation, phosphorylation of CDKN1B and inhibition of cell cycle arrest. Also interacts with CDK1. Dephosphorylated by PPM1H, leading to CDKN1B stability. Post-translationally, phosphorylated; phosphorylation occurs on serine, threonine and tyrosine residues. Phosphorylation on Ser-10 is the major site of phosphorylation in resting cells, takes place at the G(0)-G(1) phase and leads to protein stability. Phosphorylation on other sites is greatly enhanced by mitogens, growth factors, MYC and in certain cancer cell lines. The phosphorylated form found in the cytoplasm is inactivate. Phosphorylation on Tyr-88 has no effect on binding CDK complexes. Ubiquitinated; in the cytoplasm by the KPC complex (composed of RNF123/KPC1 and UBAC1/KPC2) and, in the nucleus, by SCF(SKP2). The latter requires prior phosphorylation on Thr-187. Ubiquitinated; by a TRIM21-containing SCF(SKP2)-like complex; leads to its degradation. In terms of processing, subject to degradation in the lysosome. Interaction with SNX6 promotes lysosomal degradation.

The protein resides in the nucleus. Its subcellular location is the cytoplasm. It is found in the endosome. Functionally, important regulator of cell cycle progression. Inhibits the kinase activity of CDK2 bound to cyclin A, but has little inhibitory activity on CDK2 bound to SPDYA. Involved in G1 arrest. Potent inhibitor of cyclin E- and cyclin A-CDK2 complexes. Forms a complex with cyclin type D-CDK4 complexes and is involved in the assembly, stability, and modulation of CCND1-CDK4 complex activation. Acts either as an inhibitor or an activator of cyclin type D-CDK4 complexes depending on its phosphorylation state and/or stoichometry. This is Cyclin-dependent kinase inhibitor 1B (CDKN1B) from Neovison vison (American mink).